Reading from the N-terminus, the 999-residue chain is Sarcoplasmic/endoplasmic reticulum calcium ATPase 3 (999 aa).

The residue at position 1 (methionine 1) is an N-acetylmethionine. The Cytoplasmic segment spans residues 1-48 (MEEAHLLPAADVLRRFSVTAEGGLSPAQVTRARERYGPNELPTEEGKS). Serine 17 is modified (phosphoserine). A Phosphothreonine modification is found at threonine 19. At serine 25 the chain carries Phosphoserine. A helical transmembrane segment spans residues 49–69 (LWELVLEQFEDLLVRILLLAA). Residues 70 to 89 (LVSFVLACFEEGEETTTAFV) lie on the Extracellular side of the membrane. The helical transmembrane segment at 90 to 110 (EPLVIVLILVANAVVGVWQER) threads the bilayer. Residues 111–253 (NAENAIEALK…PERTPLQQKL (143 aa)) are Cytoplasmic-facing. The helical transmembrane segment at 254–273 (DEFGRQLSRAISVICMAVWV) threads the bilayer. The Extracellular portion of the chain corresponds to 274 to 295 (INIGHFADPAHGGSWLRGAVYY). Residues 296–313 (FKIAVALAVAAIPEGLPA) traverse the membrane as a helical segment. Ca(2+)-binding residues include valine 304, alanine 305, isoleucine 307, and glutamate 309. Residues 314 to 757 (VITTCLALGT…EEGRAIYSNM (444 aa)) lie on the Cytoplasmic side of the membrane. Catalysis depends on aspartate 351, which acts as the 4-aspartylphosphate intermediate. Residues aspartate 351 and threonine 353 each coordinate Mg(2+). An ATP-binding site is contributed by threonine 353. Positions 370 to 400 (AEAEAGTCRLHEFTISGTTYAPEGEVRQGEQ) are interaction with phospholamban 1. Threonine 415 carries the post-translational modification Phosphothreonine. ATP-binding residues include glutamate 442, arginine 489, lysine 515, arginine 560, threonine 625, glycine 626, and aspartate 627. Serine 662 bears the Phosphoserine mark. 2 residues coordinate ATP: arginine 678 and lysine 684. Aspartate 703 contacts Mg(2+). Asparagine 706 is an ATP binding site. A helical membrane pass occupies residues 758–777 (KQFIRYLISSNVGEVVCIFL). Ca(2+)-binding residues include asparagine 768 and glutamate 771. Residues 778 to 787 (TAILGLPEAL) lie on the Extracellular side of the membrane. Residues 788 to 808 (IPVQLLWVNLVTDGLPATALG) traverse the membrane as a helical segment. An interaction with phospholamban 2 region spans residues 788–808 (IPVQLLWVNLVTDGLPATALG). 3 residues coordinate Ca(2+): asparagine 796, threonine 799, and aspartate 800. Over 809 to 828 (FNPPDLDIMEKRPRNPREAL) the chain is Cytoplasmic. The chain crosses the membrane as a helical span at residues 829–851 (ISGWLFFRYLAIGVYVGLATVAA). Residues 852–897 (ATWWFLYDAEGPQVTFYQLRNFLKCSEDNPLFTGTDCEVFESRFPT) lie on the Extracellular side of the membrane. A disulfide bond links cysteine 876 and cysteine 888. A helical membrane pass occupies residues 898 to 917 (TMALSVLVTTEMCNALNSVS). Glutamate 908 is a Ca(2+) binding site. Topologically, residues 918–930 (ENQSLLRMPPWLN) are cytoplasmic. A helical transmembrane segment spans residues 931–949 (PWLLAAVAMSMALHFLILL). The Extracellular portion of the chain corresponds to 950–964 (VPPLPLIFQVTPLSG). A helical transmembrane segment spans residues 965-985 (RQWVVVLQISLPVILLDEALK). Topologically, residues 986-999 (YLSRKHVDEEKGRQ) are cytoplasmic.

It belongs to the cation transport ATPase (P-type) (TC 3.A.3) family. Type IIA subfamily. In terms of assembly, interacts with sarcolipin (SLN). Interacts with phospholamban (PLN). Interacts with myoregulin (MRLN). Interacts with DWORF. Interacts with VMP1. Interacts with TUNAR; the interaction occurs at low levels in low glucose conditions and is increased by high glucose levels. It depends on Mg(2+) as a cofactor. Expressed in endothelial tissues.

Its subcellular location is the endoplasmic reticulum membrane. It localises to the sarcoplasmic reticulum membrane. The enzyme catalyses Ca(2+)(in) + ATP + H2O = Ca(2+)(out) + ADP + phosphate + H(+). Inhibited by sarcolipin (SLN), phospholamban (PLN) and myoregulin (MRLN). Enhanced by DWORF; DWORF increases activity by displacing sarcolipin (SLN), phospholamban (PLN) and myoregulin (MRLN). In terms of biological role, this magnesium-dependent enzyme catalyzes the hydrolysis of ATP coupled with the transport of calcium. Transports calcium ions from the cytosol into the sarcoplasmic/endoplasmic reticulum lumen. Contributes to calcium sequestration involved in muscular excitation/contraction. This Sus scrofa (Pig) protein is Sarcoplasmic/endoplasmic reticulum calcium ATPase 3 (ATP2A3).